The sequence spans 206 residues: LOB domain-containing protein 2 (206 aa).

Positions 1–20 (MMQRNSNNTSITSNISNNSS) are disordered. Residues 23-123 (QACASCKHQR…KSLVHNQPLI (101 aa)) enclose the LOB domain.

It belongs to the LOB domain-containing protein family.

The polypeptide is LOB domain-containing protein 2 (LBD2) (Arabidopsis thaliana (Mouse-ear cress)).